The following is a 226-amino-acid chain: 7-cyano-7-deazaguanine synthase (226 aa).

Leu-7 to Thr-17 contributes to the ATP binding site. Positions 187, 195, 198, and 201 each coordinate Zn(2+).

It belongs to the QueC family. Zn(2+) is required as a cofactor.

It carries out the reaction 7-carboxy-7-deazaguanine + NH4(+) + ATP = 7-cyano-7-deazaguanine + ADP + phosphate + H2O + H(+). Its pathway is purine metabolism; 7-cyano-7-deazaguanine biosynthesis. Catalyzes the ATP-dependent conversion of 7-carboxy-7-deazaguanine (CDG) to 7-cyano-7-deazaguanine (preQ(0)). This is 7-cyano-7-deazaguanine synthase from Chloroherpeton thalassium (strain ATCC 35110 / GB-78).